The following is a 427-amino-acid chain: Trigger factor (427 aa).

One can recognise a PPIase FKBP-type domain in the interval 163-248 (GDVVNLDFDG…INEVKSKEVP (86 aa)).

The protein belongs to the FKBP-type PPIase family. Tig subfamily.

It localises to the cytoplasm. It carries out the reaction [protein]-peptidylproline (omega=180) = [protein]-peptidylproline (omega=0). Its function is as follows. Involved in protein export. Acts as a chaperone by maintaining the newly synthesized protein in an open conformation. Functions as a peptidyl-prolyl cis-trans isomerase. The polypeptide is Trigger factor (Macrococcus caseolyticus (strain JCSC5402) (Macrococcoides caseolyticum)).